We begin with the raw amino-acid sequence, 446 residues long: Putative ZDHHC-type palmitoyltransferase 2 (446 aa).

Disordered stretches follow at residues 1–33 (MNLY…INNN) and 56–83 (QIIN…HNNP). Asn5, Asn8, Asn14, and Asn21 each carry an N-linked (GlcNAc...) asparagine glycan. The span at 56–81 (QIINKNNNNNHNRNNNNNNNNNNNHN) shows a compositional bias: low complexity. Residues Asn141, Asn145, Asn159, and Asn165 are each glycosylated (N-linked (GlcNAc...) asparagine). 5 consecutive transmembrane segments (helical) span residues 178 to 198 (IVIF…IFPW), 210 to 230 (IHSF…YLCS), 305 to 325 (YFVL…TLLI), 349 to 369 (LFLL…IMAL), and 410 to 430 (IISN…LPTI). Positions 261–311 (KWCNKCNHQKPERAHHCRYCNRCVLRMDHHCQWLQNCIGLFNQKYFVLFLF) constitute a DHHC domain.

It belongs to the DHHC palmitoyltransferase family.

Its subcellular location is the membrane. It carries out the reaction L-cysteinyl-[protein] + hexadecanoyl-CoA = S-hexadecanoyl-L-cysteinyl-[protein] + CoA. The polypeptide is Putative ZDHHC-type palmitoyltransferase 2 (Dictyostelium discoideum (Social amoeba)).